A 193-amino-acid chain; its full sequence is Peptidyl-tRNA hydrolase (193 aa).

Tyr-17 lines the tRNA pocket. His-22 acts as the Proton acceptor in catalysis. TRNA contacts are provided by Tyr-69, Asn-71, and Asn-117.

It belongs to the PTH family. In terms of assembly, monomer.

The protein resides in the cytoplasm. The catalysed reaction is an N-acyl-L-alpha-aminoacyl-tRNA + H2O = an N-acyl-L-amino acid + a tRNA + H(+). Hydrolyzes ribosome-free peptidyl-tRNAs (with 1 or more amino acids incorporated), which drop off the ribosome during protein synthesis, or as a result of ribosome stalling. In terms of biological role, catalyzes the release of premature peptidyl moieties from peptidyl-tRNA molecules trapped in stalled 50S ribosomal subunits, and thus maintains levels of free tRNAs and 50S ribosomes. This chain is Peptidyl-tRNA hydrolase, found in Leifsonia xyli subsp. xyli (strain CTCB07).